The sequence spans 435 residues: 5'-deoxyadenosine deaminase (435 aa).

The Zn(2+) site is built by His-64 and His-66. The substrate site is built by Glu-93 and His-185. Residue His-212 participates in Zn(2+) binding. Residues Glu-215 and Asp-300 each coordinate substrate. Zn(2+) is bound at residue Asp-300.

The protein belongs to the metallo-dependent hydrolases superfamily. MTA/SAH deaminase family. In terms of assembly, homotetramer. It depends on Zn(2+) as a cofactor.

The catalysed reaction is 5'-deoxyadenosine + H2O + H(+) = 5'-deoxyinosine + NH4(+). It carries out the reaction S-adenosyl-L-homocysteine + H2O + H(+) = S-inosyl-L-homocysteine + NH4(+). It catalyses the reaction S-methyl-5'-thioadenosine + H2O + H(+) = S-methyl-5'-thioinosine + NH4(+). The enzyme catalyses adenosine + H2O + H(+) = inosine + NH4(+). It participates in amino-acid biosynthesis; S-adenosyl-L-methionine biosynthesis. Its function is as follows. Catalyzes the deamination of three SAM-derived enzymatic products, namely 5'-deoxyadenosine, S-adenosyl-L-homocysteine, and 5'-methylthioadenosine, to produce the inosine analogs. Can also deaminate adenosine. The preferred substrate for this enzyme is 5'-deoxyadenosine, but all these substrates are efficiently deaminated. Likely functions in a S-adenosyl-L-methionine (SAM) recycling pathway from S-adenosyl-L-homocysteine (SAH) produced from SAM-dependent methylation reactions. May also be involved in the recycling of 5'-deoxyadenosine, whereupon the 5'-deoxyribose moiety of 5'-deoxyinosine is further metabolized to deoxyhexoses used for the biosynthesis of aromatic amino acids in methanogens. This chain is 5'-deoxyadenosine deaminase, found in Methanobrevibacter smithii (strain ATCC 35061 / DSM 861 / OCM 144 / PS).